Here is a 327-residue protein sequence, read N- to C-terminus: WRKY transcription factor WRKY76 (327 aa).

A coiled-coil region spans residues 56 to 76 (AKILEAKVTQMSEENRRLTEV). The segment at 88–134 (LGLDGSASPPRPVSPLSGKKRSRESMETANSCDANSNRHQGGDADHA) is disordered. A Nuclear localization signal motif is present at residues 106–112 (KKRSRES). The segment covering 114-126 (ETANSCDANSNRH) has biased composition (polar residues). The WRKY DNA-binding region spans 160 to 226 (DTSLVVKDGY…YEGEHNHPHP (67 aa)).

This sequence belongs to the WRKY group II-a family.

The protein resides in the nucleus. Transcription repressor. Interacts specifically with the W box (5'-(T)TGAC[CT]-3'), a frequently occurring elicitor-responsive cis-acting element. Regulates, probably indirectly, the activation of defense-related genes during defense response. Modulates plant innate immunity against X.oryzae pv. oryzae (Xoo). In Oryza sativa subsp. indica (Rice), this protein is WRKY transcription factor WRKY76.